Consider the following 858-residue polypeptide: Volume-regulated anion channel subunit LRRC8D (858 aa).

Residues 1–22 (MFTLAEVASLNDIQPTYRILKP) are Cytoplasmic-facing. A helical transmembrane segment spans residues 23-48 (WWDVFMDYLAVVMLMVAIFAGTMQLT). The Extracellular segment spans residues 49-163 (KDQVVCLPVL…YHLALPWYSK (115 aa)). C54 and C354 are joined by a disulfide. Residues 164–182 (YFPYLALIHTIILMVSSNF) traverse the membrane as a helical segment. Topologically, residues 183-308 (WFKYPKTCSK…EDSDLIYKLY (126 aa)) are cytoplasmic. Residues 221–251 (SEENKQRITGAQTLPKHVSTSSDEGSPSAST) form a disordered region. Residues 227-251 (RITGAQTLPKHVSTSSDEGSPSAST) show a composition bias toward polar residues. A phosphoserine mark is found at S241, S242, and S246. The chain crosses the membrane as a helical span at residues 309 to 328 (VVQTVIKTAKFIFILCYTAN). Over 329-360 (FVNAISFEHVCKPKVEHLIGYEVFECTHNMAY) the chain is Extracellular. A helical membrane pass occupies residues 361–386 (MLKKLLISYISIICVYGFICLYTLFW). The Cytoplasmic portion of the chain corresponds to 387–858 (LFRIPLKEYS…DINIPFANGI (472 aa)). LRR repeat units lie at residues 514–534 (NLQELHLCHCPAKVEQTAFSF), 538–559 (HLRCLHVKFTDVAEIPAWVYLL), 561–582 (NLRELYLIGNLNSENNKMIGLE), 589–609 (HLKILHVKSNLTKVPSNITDV), 612–632 (HLTKLVIHNDGTKLLVLNSLK), 636–657 (NVAELELQNCELERIPHAIFSL), 659–680 (NLQELDLKSNNIRTIEEIISFQ), 684–705 (RLTCLKLWHNKIVTIPPSITHV), 707–728 (NLESLYFSNNKLESLPVAVFSL), 730–751 (KLRCLDVSYNNISMIPIEIGLL), 753–774 (NLQHLHITGNKVDILPKQLFKC), 776–797 (KLRTLNLGQNCITSLPEKVGQL), and 799–820 (QLTQLELKGNCLDRLPAQLGQC).

The protein belongs to the LRRC8 family. Heterohexamer; oligomerizes with other LRRC8 proteins (LRRC8A, LRRC8B, LRRC8C and/or LRRC8E) to form a heterohexamer. In vivo, the subunit composition may depend primarily on expression levels, and heterooligomeric channels containing various proportions of the different LRRC8 proteins may coexist.

It is found in the cell membrane. The protein resides in the endoplasmic reticulum membrane. The catalysed reaction is chloride(in) = chloride(out). It catalyses the reaction iodide(out) = iodide(in). The enzyme catalyses taurine(out) = taurine(in). Non-essential component of the volume-regulated anion channel (VRAC, also named VSOAC channel), an anion channel required to maintain a constant cell volume in response to extracellular or intracellular osmotic changes. The VRAC channel conducts iodide better than chloride and can also conduct organic osmolytes like taurine. Plays a redundant role in the efflux of amino acids, such as aspartate, in response to osmotic stress. LRRC8A and LRRC8D are required for the uptake of the drug cisplatin. Channel activity requires LRRC8A plus at least one other family member (LRRC8B, LRRC8C, LRRC8D or LRRC8E); channel characteristics depend on the precise subunit composition. Also acts as a regulator of glucose-sensing in pancreatic beta cells: VRAC currents, generated in response to hypotonicity- or glucose-induced beta cell swelling, depolarize cells, thereby causing electrical excitation, leading to increase glucose sensitivity and insulin secretion. VRAC channels containing LRRC8D inhibit transport of immunoreactive cyclic dinucleotide GMP-AMP (2'-3'-cGAMP), an immune messenger produced in response to DNA virus in the cytosol. Mediates the import of the antibiotic blasticidin-S into the cell. The protein is Volume-regulated anion channel subunit LRRC8D of Homo sapiens (Human).